Reading from the N-terminus, the 154-residue chain is Aspartate carbamoyltransferase regulatory chain (154 aa).

Positions 109, 114, 138, and 141 each coordinate Zn(2+).

This sequence belongs to the PyrI family. As to quaternary structure, contains catalytic and regulatory chains. The cofactor is Zn(2+).

Its function is as follows. Involved in allosteric regulation of aspartate carbamoyltransferase. The sequence is that of Aspartate carbamoyltransferase regulatory chain from Aliivibrio fischeri (strain ATCC 700601 / ES114) (Vibrio fischeri).